The chain runs to 705 residues: ATP-dependent DNA helicase Q-like 2 (705 aa).

Positions 1 to 30 (MESEAIQEDLQNLDVELKDVQGQISALIEH) form a coiled coil. In terms of domain architecture, Helicase ATP-binding spans 98–273 (INAIMTGRDV…IEMLHIPKCV (176 aa)). An ATP-binding site is contributed by 111–118 (MAAGGGKS). A DEAH box motif is present at residues 217–220 (DEAH). The Helicase C-terminal domain maps to 298–450 (VVDEIAEFIR…DIVRYCQSKT (153 aa)). Residues 591–670 (SITFSGLELK…MRHEAVSEQL (80 aa)) enclose the HRDC domain. The segment at 668–705 (EQLVEDPTKEETCKSRLRKRAKTQKDVVLVESSGEEEA) is disordered.

It belongs to the helicase family. RecQ subfamily. Interacts with WEX. Mg(2+) serves as cofactor. It depends on Mn(2+) as a cofactor. Expressed in shoots and flowers. Expressed in young leaves, inflorescences, roots, shoot apical meristem, young siliques, and mature green siliques.

The protein resides in the nucleus. It catalyses the reaction Couples ATP hydrolysis with the unwinding of duplex DNA by translocating in the 3'-5' direction.. It carries out the reaction ATP + H2O = ADP + phosphate + H(+). Its function is as follows. 3'-5' DNA helicase that may play a role in the repair of DNA. Its DNA unwinding activity in vitro is dependent on magnesium, and ATP or dATP. Can use GTP/dGTP, CTP/dCTP or UTP/dUTP as nucleotide cofactors. Catalyzes Holliday junction branch migration and replication fork regression. Disrupts D-loop structures. Unwinds G-quadruplex DNA, found in telomeric DNA. This is ATP-dependent DNA helicase Q-like 2 from Arabidopsis thaliana (Mouse-ear cress).